Reading from the N-terminus, the 218-residue chain is Adenylate kinase (218 aa).

10-15 (GAGKGT) contacts ATP. Residues 30-59 (STGDMLRAAVKAGTPLGQQAKAVMESGGLV) form an NMP region. AMP contacts are provided by residues threonine 31, arginine 36, 57–59 (GLV), 85–88 (GFPR), and glutamine 92. The LID stretch occupies residues 122–159 (GRRSHPASGRTYHVKFNPPKVEGKDDITGEDLIQRKDD). ATP contacts are provided by residues arginine 123 and 132–133 (TY). Positions 156 and 167 each coordinate AMP. An ATP-binding site is contributed by glycine 203.

It belongs to the adenylate kinase family. In terms of assembly, monomer.

It localises to the cytoplasm. The catalysed reaction is AMP + ATP = 2 ADP. It participates in purine metabolism; AMP biosynthesis via salvage pathway; AMP from ADP: step 1/1. Its function is as follows. Catalyzes the reversible transfer of the terminal phosphate group between ATP and AMP. Plays an important role in cellular energy homeostasis and in adenine nucleotide metabolism. In Variovorax paradoxus (strain S110), this protein is Adenylate kinase.